We begin with the raw amino-acid sequence, 525 residues long: AP-4 complex accessory subunit Tepsin (525 aa).

In terms of domain architecture, ENTH spans 8 to 141; that stretch reads RDRLSFLHRL…FSDTVLPLAP (134 aa). A disordered region spans residues 139–229; it reads LAPSQPLGTP…SHSGASREPG (91 aa). The span at 193 to 225 shows a compositional bias: low complexity; that stretch reads SGPSSQNSSQNSDLSRVSDSGSHSGSDSHSGAS. Serine 333 and serine 356 each carry phosphoserine. The segment at 355–465 is disordered; sequence LSPARGTSAE…PKRGPSSCAW (111 aa). Over residues 393-412 the composition is skewed to low complexity; the sequence is PLSSTPVSSRSPAPSSGMPS. Positions 413-429 are enriched in pro residues; the sequence is SPVPTPPPDASPIPAPG. The span at 434 to 448 shows a compositional bias: basic and acidic residues; sequence AEARLAESRRWRPER. Positions 467–477 are interaction with AP4B1; sequence RDSLFAGMELV. The interval 487–525 is disordered; it reads AAAGESCPDAPRAPQTSSQRTAAKEPPGSEPSAFAFLNA. Residues 515-525 are interaction with AP4E1; the sequence is SEPSAFAFLNA.

As to quaternary structure, interacts with AP4B1 and AP4E1; the interaction is direct and mediates the association of TEPSIN with the adapter-like complex 4 (AP-4), a heterotetramer composed of AP4B1, AP4E1, AP4M1 and AP4S1.

The protein localises to the golgi apparatus. The protein resides in the trans-Golgi network membrane. It is found in the cytoplasmic vesicle. It localises to the cytoplasm. Its subcellular location is the cytosol. Its function is as follows. Associates with the adapter-like complex 4 (AP-4) and may therefore play a role in vesicular trafficking of proteins at the trans-Golgi network. In Homo sapiens (Human), this protein is AP-4 complex accessory subunit Tepsin.